A 363-amino-acid polypeptide reads, in one-letter code: UDP-3-O-acylglucosamine N-acyltransferase (363 aa).

The active-site Proton acceptor is the His-266.

It belongs to the transferase hexapeptide repeat family. LpxD subfamily. In terms of assembly, homotrimer.

It carries out the reaction a UDP-3-O-[(3R)-3-hydroxyacyl]-alpha-D-glucosamine + a (3R)-hydroxyacyl-[ACP] = a UDP-2-N,3-O-bis[(3R)-3-hydroxyacyl]-alpha-D-glucosamine + holo-[ACP] + H(+). It functions in the pathway bacterial outer membrane biogenesis; LPS lipid A biosynthesis. In terms of biological role, catalyzes the N-acylation of UDP-3-O-acylglucosamine using 3-hydroxyacyl-ACP as the acyl donor. Is involved in the biosynthesis of lipid A, a phosphorylated glycolipid that anchors the lipopolysaccharide to the outer membrane of the cell. The protein is UDP-3-O-acylglucosamine N-acyltransferase of Bordetella pertussis (strain Tohama I / ATCC BAA-589 / NCTC 13251).